Consider the following 356-residue polypeptide: Phosphate acyltransferase (356 aa).

The protein belongs to the PlsX family. As to quaternary structure, homodimer. Probably interacts with PlsY.

Its subcellular location is the cytoplasm. It carries out the reaction a fatty acyl-[ACP] + phosphate = an acyl phosphate + holo-[ACP]. It functions in the pathway lipid metabolism; phospholipid metabolism. In terms of biological role, catalyzes the reversible formation of acyl-phosphate (acyl-PO(4)) from acyl-[acyl-carrier-protein] (acyl-ACP). This enzyme utilizes acyl-ACP as fatty acyl donor, but not acyl-CoA. This chain is Phosphate acyltransferase, found in Stutzerimonas stutzeri (strain A1501) (Pseudomonas stutzeri).